Here is a 394-residue protein sequence, read N- to C-terminus: Protein arginine N-methyltransferase 8 (394 aa).

Gly2 carries the N-myristoyl glycine lipid modification. The tract at residues 16 to 40 (MAENAAESTEVNSPPSQPPQPVVPA) is disordered. 2 consecutive short sequence motifs (SH3-binding) follow at residues 29-42 (PPSQPPQPVVPAKP) and 53-58 (PSCPGR). Pro residues predominate over residues 30–39 (PSQPPQPVVP). Arg58 carries the post-translational modification Omega-N-methylarginine; by autocatalysis. The residue at position 73 (Arg73) is an Asymmetric dimethylarginine; by autocatalysis. Residues 73–394 (RDYYFDSYAH…TSVSNDYKMR (322 aa)) enclose the SAM-dependent MTase PRMT-type domain. S-adenosyl-L-methionine is bound by residues His86, Arg95, Gly119, 119–122 (GSGT), Glu141, and Glu170. Active-site residues include Glu185 and Glu194.

This sequence belongs to the class I-like SAM-binding methyltransferase superfamily. Protein arginine N-methyltransferase family. PRMT8 subfamily. Homodimer. Tetramer; individual homodimers associates to form a homotetramer. Homooctamer; individual homodimers associates to form a homooctamer and homooligomerization is required for proper localization to the cell membrane. Heterodimer with PRMT1; heterodimerization may recruit PRMT1 activity to the plasma membrane. Interacts with PRMT2 (via the SH3 domain). Interacts with FYN (via the SH3 domain). Interacts with EWS; independently of EWS methylation status. In terms of tissue distribution, brain-specific.

The protein resides in the cell membrane. The catalysed reaction is L-arginyl-[protein] + S-adenosyl-L-methionine = N(omega)-methyl-L-arginyl-[protein] + S-adenosyl-L-homocysteine + H(+). The enzyme catalyses L-arginyl-[protein] + 2 S-adenosyl-L-methionine = N(omega),N(omega)-dimethyl-L-arginyl-[protein] + 2 S-adenosyl-L-homocysteine + 2 H(+). Its function is as follows. S-adenosyl-L-methionine-dependent and membrane-associated arginine methyltransferase that can both catalyze the formation of omega-N monomethylarginine (MMA) and asymmetrical dimethylarginine (aDMA) in proteins such as NIFK, myelin basic protein, histone H4, H2A and H2A/H2B dimer. Able to mono- and dimethylate EWS protein; however its precise role toward EWS remains unclear as it still interacts with fully methylated EWS. The sequence is that of Protein arginine N-methyltransferase 8 from Homo sapiens (Human).